The primary structure comprises 194 residues: Protein PHLOEM PROTEIN 2-LIKE A2 (194 aa).

A helical membrane pass occupies residues 49 to 71 (VTFVFFCFFKISLNSAYLYTLYS).

As to expression, vascular tissues, specifically in phloem companion cell-sieve element complexes.

It localises to the membrane. The sequence is that of Protein PHLOEM PROTEIN 2-LIKE A2 (PP2A2) from Arabidopsis thaliana (Mouse-ear cress).